We begin with the raw amino-acid sequence, 337 residues long: HTH-type transcriptional repressor PurR (337 aa).

One can recognise an HTH lacI-type domain in the interval 2–56 (ATIKDVAKLAAVSTTTVSHVINKTRFVAEATQKRVWEAVEELNYAPSAVARSLKC). The segment at residues 4 to 23 (IKDVAKLAAVSTTTVSHVIN) is a DNA-binding region (H-T-H motif). A DNA-binding region spans residues 48 to 56 (SAVARSLKC). Hypoxanthine is bound by residues Phe73, Lys189, Thr191, Phe220, and Asp276.

Homodimer.

It participates in purine metabolism; purine nucleotide biosynthesis [regulation]. Its function is as follows. Is the main repressor of the genes involved in the de novo synthesis of purine nucleotides, regulating purB, purC, purEK, purF, purHD, purL, purMN and guaBA expression. PurR is allosterically activated to bind its cognate DNA by binding the purine corepressors, hypoxanthine or guanine, thereby effecting transcription repression. This is HTH-type transcriptional repressor PurR from Aliivibrio fischeri (strain ATCC 700601 / ES114) (Vibrio fischeri).